The primary structure comprises 239 residues: tRNA (guanine-N(1)-)-methyltransferase (239 aa).

Residues glycine 110 and 130-135 each bind S-adenosyl-L-methionine; that span reads IGDYVL.

The protein belongs to the RNA methyltransferase TrmD family. As to quaternary structure, homodimer.

It is found in the cytoplasm. It catalyses the reaction guanosine(37) in tRNA + S-adenosyl-L-methionine = N(1)-methylguanosine(37) in tRNA + S-adenosyl-L-homocysteine + H(+). Functionally, specifically methylates guanosine-37 in various tRNAs. The polypeptide is tRNA (guanine-N(1)-)-methyltransferase (Borrelia garinii subsp. bavariensis (strain ATCC BAA-2496 / DSM 23469 / PBi) (Borreliella bavariensis)).